A 518-amino-acid polypeptide reads, in one-letter code: MLTFDNRFLRELPGDPETSNQLRQVYGACWSRVMPTSVSSPKLLAYSHEMLEALELSEEEIRSPAWVDALAGNGLMPGMEPYAACYGGHQFGHWAGQLGDGRAISLGEVVNRQGQRWELQLKGAGVTPYSRMADGRAVLRSSVREFLCSEAMHHLGIPTTRALSLVQTGDVVIRDMFYDGHPQAEKGAIVCRVSPSFIRFGNFEIFAMRDDKQTLQKLVDFTIDRDFPELRNYPEEERLAEWFAIICVRTARLIAQWMRVGFVHGVMNTDNMSILGLTIDYGPYGWVDNFDPGWTPNTTDAAGRRYCFGRQPDIARWNLERLAQALYTLKPEREIYDEGLMLYDQAYNNEWGAVLAAKFGFSAWRDEYEPLLNEVFGLMTQAEIDMTEFFRKLALVDAAQPDLGILQSAAYSPALWETFKPRFSDWLGQYAQATLADGRDPAERREAMNRVNPRYVLRNYLAQQAIDLADTGDTSMIEALMDVLRKPYDEQPGKERFAALRPDWARHKAGCSMLSCSS.

Residues glycine 99, glycine 101, arginine 102, lysine 122, aspartate 134, glycine 135, arginine 192, and arginine 199 each coordinate ATP. Catalysis depends on aspartate 270, which acts as the Proton acceptor. The Mg(2+) site is built by asparagine 271 and aspartate 280. An ATP-binding site is contributed by aspartate 280.

Belongs to the SELO family. Mg(2+) is required as a cofactor. The cofactor is Mn(2+).

It catalyses the reaction L-seryl-[protein] + ATP = 3-O-(5'-adenylyl)-L-seryl-[protein] + diphosphate. The catalysed reaction is L-threonyl-[protein] + ATP = 3-O-(5'-adenylyl)-L-threonyl-[protein] + diphosphate. The enzyme catalyses L-tyrosyl-[protein] + ATP = O-(5'-adenylyl)-L-tyrosyl-[protein] + diphosphate. It carries out the reaction L-histidyl-[protein] + UTP = N(tele)-(5'-uridylyl)-L-histidyl-[protein] + diphosphate. It catalyses the reaction L-seryl-[protein] + UTP = O-(5'-uridylyl)-L-seryl-[protein] + diphosphate. The catalysed reaction is L-tyrosyl-[protein] + UTP = O-(5'-uridylyl)-L-tyrosyl-[protein] + diphosphate. Functionally, nucleotidyltransferase involved in the post-translational modification of proteins. It can catalyze the addition of adenosine monophosphate (AMP) or uridine monophosphate (UMP) to a protein, resulting in modifications known as AMPylation and UMPylation. This chain is Protein nucleotidyltransferase YdiU, found in Methylobacillus flagellatus (strain ATCC 51484 / DSM 6875 / VKM B-1610 / KT).